A 589-amino-acid polypeptide reads, in one-letter code: Aspartate--tRNA(Asp/Asn) ligase (589 aa).

Glu-170 is a binding site for L-aspartate. An aspartate region spans residues 194-197; that stretch reads QLFK. An L-aspartate-binding site is contributed by Arg-216. ATP is bound by residues 216–218 and Gln-225; that span reads RDE. His-448 contacts L-aspartate. Glu-482 is an ATP binding site. Arg-489 is an L-aspartate binding site. 534-537 lines the ATP pocket; that stretch reads GWDR. Residues 563-589 are disordered; that stretch reads PLTDAPASITAQQRKESGIDTKPKEVE. The span at 575-589 shows a compositional bias: basic and acidic residues; sequence QRKESGIDTKPKEVE.

This sequence belongs to the class-II aminoacyl-tRNA synthetase family. Type 1 subfamily. In terms of assembly, homodimer.

Its subcellular location is the cytoplasm. The enzyme catalyses tRNA(Asx) + L-aspartate + ATP = L-aspartyl-tRNA(Asx) + AMP + diphosphate. Functionally, aspartyl-tRNA synthetase with relaxed tRNA specificity since it is able to aspartylate not only its cognate tRNA(Asp) but also tRNA(Asn). Reaction proceeds in two steps: L-aspartate is first activated by ATP to form Asp-AMP and then transferred to the acceptor end of tRNA(Asp/Asn). The polypeptide is Aspartate--tRNA(Asp/Asn) ligase (Mycobacterium leprae (strain Br4923)).